We begin with the raw amino-acid sequence, 870 residues long: MTQQPQAKYRHDYRAPDYQITDIDLTFDLDAQKTVVTAVSQAVRHGASDAPLRLNGEDLKLVSVHINDEPWTAWKEEEGALVISNLPERFTLKIINEISPAANTALEGLYQSGDALCTQCEAEGFRHITYYLDRPDVLARFTTKIIADKIKYPFLLSNGNRVAQGELENGRHWVQWQDPFPKPCYLFALVAGDFDVLRDTFTTRSGREVALELYVDRGNLDRAPWAMTSLKNSMKWDEERFGLEYDLDIYMIVAVDFFNMGAMENKGLNIFNSKYVLARTDTATDKDYLDIERVIGHEYFHNWTGNRVTCRDWFQLSLKEGLTVFRDQEFSSDLGSRAVNRINNVRTMRGLQFAEDASPMAHPIRPDMVIEMNNFYTLTVYEKGAEVIRMIHTLLGEENFQKGMQLYFERHDGSAATCDDFVQAMEDASNVDLSHFRRWYSQSGTPIVTVKDDYNPETEQYTLTISQRTPATPDQAEKQPLHIPFAIELYDNEGKVIPLQKGGHPVNSVLNVTQAEQTFVFDNVYFQPVPALLCEFSAPVKLEYKWSDQQLTFLMRHARNDFSRWDAAQSLLATYIKLNVARHQQGQPLSLPVHVADAFRAVLLDEKIDPALAAEILTLPSVNEMAELFDIIDPIAIAEVREALTRTLATELADELLAIYNANYQSEYRVEHEDIAKRTLRNACLRFLAFGETHLADVLVSKQFHEANNMTDALAALSAAVAAQLPCRDALMQEYDDKWHQNGLVMDKWFILQATSPAANVLETVRGLLQHRSFTMSNPNRIRSLIGAFAGSNPAAFHAEDGSGYLFLVEMLTDLNSRNPQVASRLIEPLIRLKRYDAKRQEKMRAALEQLKGLENLSGDLYEKITKALA.

Residues E121 and 261-265 each bind substrate; that span reads GAMEN. Zn(2+) is bound at residue H297. E298 (proton acceptor) is an active-site residue. Zn(2+)-binding residues include H301 and E320.

The protein belongs to the peptidase M1 family. Requires Zn(2+) as cofactor.

The protein resides in the cell inner membrane. It carries out the reaction Release of an N-terminal amino acid, Xaa-|-Yaa- from a peptide, amide or arylamide. Xaa is preferably Ala, but may be most amino acids including Pro (slow action). When a terminal hydrophobic residue is followed by a prolyl residue, the two may be released as an intact Xaa-Pro dipeptide.. Its function is as follows. Aminopeptidase N is involved in the degradation of intracellular peptides generated by protein breakdown during normal growth as well as in response to nutrient starvation. The chain is Aminopeptidase N (pepN) from Escherichia coli (strain K12).